The sequence spans 381 residues: uncharacterized protein (381 aa).

Positions 176–292 are disordered; that stretch reads HAAGKIKKSK…EPMVDETPQN (117 aa). Basic residues predominate over residues 177–186; it reads AAGKIKKSKN. A compositionally biased stretch (basic and acidic residues) spans 187–212; the sequence is QKKDGTLSRPLGKKENKSVVKVKIEE. Over residues 276–286 the composition is skewed to acidic residues; it reads DEEDEDEEPMV.

This is an uncharacterized protein from Caenorhabditis elegans.